Consider the following 318-residue polypeptide: NADH-ubiquinone oxidoreductase chain 1 (318 aa).

8 helical membrane-spanning segments follow: residues 2 to 22, 70 to 90, 100 to 120, 147 to 167, 172 to 192, 222 to 242, 253 to 273, and 294 to 314; these read FMIN…FLTL, MFIL…IPLP, LGVL…LWSG, AIIL…TLII, MWLI…TLAE, LFFM…AILF, ELYT…FLWI, and LPLT…TSGI.

This sequence belongs to the complex I subunit 1 family. Core subunit of respiratory chain NADH dehydrogenase (Complex I) which is composed of 45 different subunits.

It localises to the mitochondrion inner membrane. The catalysed reaction is a ubiquinone + NADH + 5 H(+)(in) = a ubiquinol + NAD(+) + 4 H(+)(out). Functionally, core subunit of the mitochondrial membrane respiratory chain NADH dehydrogenase (Complex I) which catalyzes electron transfer from NADH through the respiratory chain, using ubiquinone as an electron acceptor. Essential for the catalytic activity and assembly of complex I. This chain is NADH-ubiquinone oxidoreductase chain 1 (MT-ND1), found in Bos indicus (Zebu).